A 146-amino-acid chain; its full sequence is Hemoglobin subunit beta (146 aa).

A Globin domain is found at 2–146; that stretch reads QWTAEEKQLI…VAHALARKYH (145 aa). Heme b is bound by residues His-63 and His-92.

It belongs to the globin family. As to quaternary structure, heterotetramer of two alpha chains and two beta chains. In terms of tissue distribution, red blood cells.

In terms of biological role, involved in oxygen transport from the lung to the various peripheral tissues. This chain is Hemoglobin subunit beta (HBB), found in Passer montanus (Eurasian tree sparrow).